Consider the following 199-residue polypeptide: Peroxiredoxin 2 (199 aa).

Residues 1–152 (MGQKAPDFTV…IIRVIKALQF (152 aa)) form the Thioredoxin domain. Catalysis depends on Cys-40, which acts as the Cysteine sulfenic acid (-SOH) intermediate. A substrate-binding site is contributed by Arg-115.

This sequence belongs to the peroxiredoxin family. Prx6 subfamily. Homodecamer. Pentamer of dimers that assemble into a ring structure.

It is found in the cytoplasm. The enzyme catalyses a hydroperoxide + [thioredoxin]-dithiol = an alcohol + [thioredoxin]-disulfide + H2O. Thiol-specific peroxidase that catalyzes the reduction of hydrogen peroxide and organic hydroperoxides to water and alcohols, respectively. Plays a role in cell protection against oxidative stress by detoxifying peroxides. The polypeptide is Peroxiredoxin 2 (Thermoplasma acidophilum (strain ATCC 25905 / DSM 1728 / JCM 9062 / NBRC 15155 / AMRC-C165)).